Here is a 35-residue protein sequence, read N- to C-terminus: Photosystem II reaction center protein T (35 aa).

The helical transmembrane segment at 3–23 threads the bilayer; the sequence is ALVYTFLLVGTLGIIFFAIFF.

Belongs to the PsbT family. In terms of assembly, PSII is composed of 1 copy each of membrane proteins PsbA, PsbB, PsbC, PsbD, PsbE, PsbF, PsbH, PsbI, PsbJ, PsbK, PsbL, PsbM, PsbT, PsbY, PsbZ, Psb30/Ycf12, at least 3 peripheral proteins of the oxygen-evolving complex and a large number of cofactors. It forms dimeric complexes.

The protein localises to the plastid. The protein resides in the chloroplast thylakoid membrane. Functionally, found at the monomer-monomer interface of the photosystem II (PS II) dimer, plays a role in assembly and dimerization of PSII. PSII is a light-driven water plastoquinone oxidoreductase, using light energy to abstract electrons from H(2)O, generating a proton gradient subsequently used for ATP formation. The polypeptide is Photosystem II reaction center protein T (Marchantia polymorpha (Common liverwort)).